Consider the following 429-residue polypeptide: Serine hydroxymethyltransferase (429 aa).

(6S)-5,6,7,8-tetrahydrofolate is bound by residues Leu125 and 129–131 (GHL). Lys234 is modified (N6-(pyridoxal phosphate)lysine).

This sequence belongs to the SHMT family. In terms of assembly, homodimer. Requires pyridoxal 5'-phosphate as cofactor.

It is found in the cytoplasm. The catalysed reaction is (6R)-5,10-methylene-5,6,7,8-tetrahydrofolate + glycine + H2O = (6S)-5,6,7,8-tetrahydrofolate + L-serine. The protein operates within one-carbon metabolism; tetrahydrofolate interconversion. It functions in the pathway amino-acid biosynthesis; glycine biosynthesis; glycine from L-serine: step 1/1. Functionally, catalyzes the reversible interconversion of serine and glycine with tetrahydrofolate (THF) serving as the one-carbon carrier. This reaction serves as the major source of one-carbon groups required for the biosynthesis of purines, thymidylate, methionine, and other important biomolecules. Also exhibits THF-independent aldolase activity toward beta-hydroxyamino acids, producing glycine and aldehydes, via a retro-aldol mechanism. This chain is Serine hydroxymethyltransferase, found in Allorhizobium ampelinum (strain ATCC BAA-846 / DSM 112012 / S4) (Agrobacterium vitis (strain S4)).